The sequence spans 327 residues: 4-hydroxy-2-oxoglutarate aldolase, mitochondrial (327 aa).

The N-terminal 25 residues, 1-25 (MLGPQVWSSVRQGLSRSLSRNVGVW), are a transit peptide targeting the mitochondrion. 77–78 (SN) is a substrate binding site. Lys-196 serves as the catalytic Schiff-base intermediate with substrate. Substrate is bound by residues Ser-198 and Gly-222.

It belongs to the DapA family. As to quaternary structure, homotetramer.

The protein resides in the mitochondrion. It catalyses the reaction (4S)-4-hydroxy-2-oxoglutarate = glyoxylate + pyruvate. It carries out the reaction (4R)-4-hydroxy-2-oxoglutarate = glyoxylate + pyruvate. With respect to regulation, inhibited by divalent cations. Catalyzes the final step in the metabolic pathway of hydroxyproline. The chain is 4-hydroxy-2-oxoglutarate aldolase, mitochondrial (HOGA1) from Homo sapiens (Human).